We begin with the raw amino-acid sequence, 122 residues long: MNDFSRSISDLTPERVTTAFDLAGHTTARSLGVAQGIVVRSRSIVGSFGAALQTIFGGNITLYTSLCEKARQQAFDKMLADARKLGANAIVAMRYDSTEIGSGITEVICYGTAVQVTRNAGA.

The protein belongs to the UPF0145 family.

In Burkholderia ambifaria (strain MC40-6), this protein is UPF0145 protein BamMC406_5002.